The chain runs to 197 residues: Large ribosomal subunit protein bL25 (197 aa).

This sequence belongs to the bacterial ribosomal protein bL25 family. CTC subfamily. Part of the 50S ribosomal subunit; part of the 5S rRNA/L5/L18/L25 subcomplex. Contacts the 5S rRNA. Binds to the 5S rRNA independently of L5 and L18.

In terms of biological role, this is one of the proteins that binds to the 5S RNA in the ribosome where it forms part of the central protuberance. The sequence is that of Large ribosomal subunit protein bL25 from Pseudomonas putida (strain ATCC 700007 / DSM 6899 / JCM 31910 / BCRC 17059 / LMG 24140 / F1).